A 430-amino-acid polypeptide reads, in one-letter code: Glutamate-1-semialdehyde 2,1-aminomutase (430 aa).

N6-(pyridoxal phosphate)lysine is present on Lys-265.

The protein belongs to the class-III pyridoxal-phosphate-dependent aminotransferase family. HemL subfamily. As to quaternary structure, homodimer. Pyridoxal 5'-phosphate is required as a cofactor.

Its subcellular location is the cytoplasm. The enzyme catalyses (S)-4-amino-5-oxopentanoate = 5-aminolevulinate. Its pathway is porphyrin-containing compound metabolism; protoporphyrin-IX biosynthesis; 5-aminolevulinate from L-glutamyl-tRNA(Glu): step 2/2. In Helicobacter pylori (strain J99 / ATCC 700824) (Campylobacter pylori J99), this protein is Glutamate-1-semialdehyde 2,1-aminomutase (hemL).